The sequence spans 475 residues: Zinc finger protein 296 (475 aa).

The segment at methionine 1 to alanine 78 is disordered. A Glycyl lysine isopeptide (Lys-Gly) (interchain with G-Cter in SUMO2) cross-link involves residue lysine 35. 3 consecutive C2H2-type zinc fingers follow at residues leucine 157–histidine 180, proline 231–histidine 253, and tyrosine 259–histidine 281. The segment at asparagine 275–glycine 385 is disordered. 2 stretches are compositionally biased toward low complexity: residues serine 295–proline 313 and glycine 326–alanine 338. The segment covering proline 339 to threonine 351 has biased composition (gly residues). Over residues alanine 354 to glutamine 367 the composition is skewed to polar residues. C2H2-type zinc fingers lie at residues glycine 386–histidine 408, tyrosine 414–histidine 436, and phenylalanine 445–histidine 468.

Belongs to the krueppel C2H2-type zinc-finger protein family. Interacts with KLF4.

It localises to the nucleus. In terms of biological role, may be a transcriptional corepressor with KLF4. This chain is Zinc finger protein 296 (ZNF296), found in Homo sapiens (Human).